We begin with the raw amino-acid sequence, 124 residues long: Small ribosomal subunit protein uS12 (124 aa).

The residue at position 89 (D89) is a 3-methylthioaspartic acid.

This sequence belongs to the universal ribosomal protein uS12 family. As to quaternary structure, part of the 30S ribosomal subunit. Contacts proteins S8 and S17. May interact with IF1 in the 30S initiation complex.

Functionally, with S4 and S5 plays an important role in translational accuracy. Its function is as follows. Interacts with and stabilizes bases of the 16S rRNA that are involved in tRNA selection in the A site and with the mRNA backbone. Located at the interface of the 30S and 50S subunits, it traverses the body of the 30S subunit contacting proteins on the other side and probably holding the rRNA structure together. The combined cluster of proteins S8, S12 and S17 appears to hold together the shoulder and platform of the 30S subunit. This chain is Small ribosomal subunit protein uS12, found in Vibrio cholerae serotype O1 (strain ATCC 39315 / El Tor Inaba N16961).